We begin with the raw amino-acid sequence, 413 residues long: 3-oxo-tetronate kinase (413 aa).

ATP-binding positions include S254, 354-357 (GGET), and G397.

It belongs to the four-carbon acid sugar kinase family.

The enzyme catalyses 3-dehydro-L-erythronate + ATP = 3-dehydro-4-O-phospho-L-erythronate + ADP + H(+). The catalysed reaction is 3-dehydro-D-erythronate + ATP = 3-dehydro-4-O-phospho-D-erythronate + ADP + H(+). In terms of biological role, catalyzes the ATP-dependent phosphorylation of 3-oxo-tetronate to 3-oxo-tetronate 4-phosphate. In Haemophilus influenzae (strain ATCC 51907 / DSM 11121 / KW20 / Rd), this protein is 3-oxo-tetronate kinase.